The chain runs to 132 residues: Large-conductance mechanosensitive channel (132 aa).

3 helical membrane-spanning segments follow: residues 14–34, 38–58, and 69–89; these read VIDL…VSSL, IITP…LKIT, and FIQT…FVKV.

This sequence belongs to the MscL family. In terms of assembly, homopentamer.

It localises to the cell membrane. In terms of biological role, channel that opens in response to stretch forces in the membrane lipid bilayer. May participate in the regulation of osmotic pressure changes within the cell. This chain is Large-conductance mechanosensitive channel, found in Bacillus thuringiensis (strain Al Hakam).